The sequence spans 2344 residues: Pecanex-like protein 1 (2344 aa).

The next 2 membrane-spanning stretches (helical) occupy residues 33–53 (ALHLYLWLFLLGLPFTLYMAL) and 57–77 (MIIVAVYCPVVAAVFIILKMV). Disordered stretches follow at residues 101–163 (QRAK…GSSR), 271–290 (SHSYRKEHRPRGVPRTSSSA), 306–692 (QQQR…TRAR), and 749–837 (VTRS…VQSR). A compositionally biased stretch (polar residues) spans 143 to 163 (SSRNSYAGLDPSNQIGSGSSR). Basic residues predominate over residues 272-282 (HSYRKEHRPRG). Positions 328–343 (RESSAGKSCPPAQSQP) are enriched in polar residues. A compositionally biased stretch (low complexity) spans 372 to 390 (SLRSLSTRSSGSTESYCSG). The span at 396 to 406 (NSTLSSYKSEQ) shows a compositional bias: polar residues. Composition is skewed to basic and acidic residues over residues 416–458 (LSEH…DKTA), 508–522 (RPPEQSAESKEEQSE), and 531–547 (RVCKDDGGKQKEGDVRP). The segment covering 557–572 (TSAHKPGRRRTGKKRA) has biased composition (basic residues). The segment covering 616–638 (SIHSAHQFSSDSSSSATSHSCQS) has biased composition (low complexity). Over residues 749–758 (VTRSRNSLPS) the composition is skewed to polar residues. Low complexity-rich tracts occupy residues 770 to 781 (AATGAAQASEEA) and 817 to 835 (LSLQDGQQGQQSTAQVKVQ). 3 consecutive transmembrane segments (helical) span residues 1010-1030 (ILAVVLAILVAFLGSILLIQG), 1035-1055 (IWVFQFCLVIASCQYSLLKSV), and 1069-1089 (IIAYSRPVYFCLCCGLIWLLD). N-linked (GlcNAc...) asparagine glycosylation occurs at Asn-1094. Residues 1119-1139 (LVIVFTLCFPIVFFIGLLPQV) form a helical membrane-spanning segment. N-linked (GlcNAc...) asparagine glycosylation occurs at Asn-1158. 4 helical membrane-spanning segments follow: residues 1163-1183 (LLAALYSFLCSIVAVALLYGL), 1196-1216 (HVPVLFSVFCGLLVAVSYHLS), 1269-1289 (LVVCVIIGVLYFAIHVSTVFT), and 1297-1317 (YVLYALVGVVGLVTHYVLPQV). N-linked (GlcNAc...) asparagine glycosylation is found at Asn-1582, Asn-1723, Asn-1985, and Asn-2075. The disordered stretch occupies residues 2051–2123 (EDSDTGGGTS…SSLVRQSPAR (73 aa)). Polar residues-rich tracts occupy residues 2061–2081 (CPGNSAVTASDPHNNVSQGST) and 2095–2118 (PTTSYPPTLGTSHSAHSVQSSLVR). N-linked (GlcNAc...) asparagine glycans are attached at residues Asn-2231, Asn-2237, and Asn-2263.

The protein belongs to the pecanex family.

The protein resides in the membrane. This is Pecanex-like protein 1 from Mus musculus (Mouse).